Reading from the N-terminus, the 311-residue chain is Ribosomal RNA small subunit methyltransferase H (311 aa).

S-adenosyl-L-methionine contacts are provided by residues 34-36 (GGY), D51, F75, D93, and Q100.

Belongs to the methyltransferase superfamily. RsmH family.

Its subcellular location is the cytoplasm. The enzyme catalyses cytidine(1402) in 16S rRNA + S-adenosyl-L-methionine = N(4)-methylcytidine(1402) in 16S rRNA + S-adenosyl-L-homocysteine + H(+). Functionally, specifically methylates the N4 position of cytidine in position 1402 (C1402) of 16S rRNA. This is Ribosomal RNA small subunit methyltransferase H from Caulobacter vibrioides (strain ATCC 19089 / CIP 103742 / CB 15) (Caulobacter crescentus).